Here is a 1940-residue protein sequence, read N- to C-terminus: Myosin-2 (1940 aa).

Residues 33–82 (DAKTSVFVAEPKESFVKGTIQSREGGKVTVKTEGGATLTVKEDQVFPMNP) form the Myosin N-terminal SH3-like domain. Phosphothreonine is present on residues threonine 64 and threonine 69. The region spanning 86–783 (DKIEDMAMMT…LLGLLEEMRD (698 aa)) is the Myosin motor domain. Lysine 130 carries the N6,N6,N6-trimethyllysine modification. 179 to 186 (GESGAGKT) contributes to the ATP binding site. Position 389 is a phosphotyrosine (tyrosine 389). Phosphoserine is present on serine 392. Threonine 419 bears the Phosphothreonine mark. At serine 625 the chain carries Phosphoserine. An actin-binding region spans residues 660 to 682 (LNKLMTNLRSTHPHFVRCIIPNE). Pros-methylhistidine is present on histidine 758. The tract at residues 762–776 (KFGHTKVFFKAGLLG) is actin-binding. In terms of domain architecture, IQ spans 786-815 (LAQLMTRTQARCRGFLARVEYQKMVERRES). A coiled-coil region spans residues 844 to 1940 (LLKSAETEKE…EVHTKIISEE (1097 aa)). A phosphoserine mark is found at serine 1093, serine 1097, serine 1163, and serine 1238. Position 1242 is a phosphothreonine (threonine 1242). Serine 1244 is subject to Phosphoserine. Residues threonine 1256 and threonine 1287 each carry the phosphothreonine modification. Phosphoserine occurs at positions 1289, 1293, 1304, and 1307. Tyrosine 1465 is modified (phosphotyrosine). Threonine 1468 bears the Phosphothreonine mark. Position 1493 is a phosphotyrosine (tyrosine 1493). The residue at position 1496 (serine 1496) is a Phosphoserine. Residue threonine 1502 is modified to Phosphothreonine. Serine 1515 carries the post-translational modification Phosphoserine. Residue threonine 1518 is modified to Phosphothreonine. Phosphoserine occurs at positions 1543, 1555, 1575, 1601, 1715, and 1727. Phosphothreonine occurs at positions 1731 and 1737. A disordered region spans residues 1886–1905 (QAEEAEEQSNTNLSKFRKLQ).

The protein belongs to the TRAFAC class myosin-kinesin ATPase superfamily. Myosin family. In terms of assembly, muscle myosin is a hexameric protein that consists of 2 heavy chain subunits (MHC), 2 alkali light chain subunits (MLC) and 2 regulatory light chain subunits (MLC-2). Interacts with GCSAM.

The protein localises to the cytoplasm. It is found in the myofibril. Its function is as follows. Myosins are actin-based motor molecules with ATPase activity essential for muscle contraction. This Bos taurus (Bovine) protein is Myosin-2 (MYH2).